We begin with the raw amino-acid sequence, 78 residues long: Large ribosomal subunit protein bL31 (78 aa).

Zn(2+)-binding residues include C16, C18, C38, and C41.

This sequence belongs to the bacterial ribosomal protein bL31 family. Type A subfamily. Part of the 50S ribosomal subunit. Requires Zn(2+) as cofactor.

Functionally, binds the 23S rRNA. This Frankia casuarinae (strain DSM 45818 / CECT 9043 / HFP020203 / CcI3) protein is Large ribosomal subunit protein bL31.